The chain runs to 132 residues: Protein NrdI (132 aa).

It belongs to the NrdI family.

Functionally, probably involved in ribonucleotide reductase function. The sequence is that of Protein NrdI from Staphylococcus haemolyticus (strain JCSC1435).